We begin with the raw amino-acid sequence, 444 residues long: NADH-quinone oxidoreductase subunit F (444 aa).

61 to 70 (GRGGAGFSTG) contributes to the NAD(+) binding site. An FMN-binding site is contributed by 176 to 223 (GAGRYICGEETALINSLEGRRANPRSKPPFPAVFGLWGKPTCVNNVET). [4Fe-4S] cluster-binding residues include C353, C356, C359, and C400.

Belongs to the complex I 51 kDa subunit family. As to quaternary structure, composed of 13 different subunits. Subunits NuoCD, E, F, and G constitute the peripheral sector of the complex. It depends on FMN as a cofactor. [4Fe-4S] cluster serves as cofactor.

The enzyme catalyses a quinone + NADH + 5 H(+)(in) = a quinol + NAD(+) + 4 H(+)(out). Functionally, NDH-1 shuttles electrons from NADH, via FMN and iron-sulfur (Fe-S) centers, to quinones in the respiratory chain. Couples the redox reaction to proton translocation (for every two electrons transferred, four hydrogen ions are translocated across the cytoplasmic membrane), and thus conserves the redox energy in a proton gradient. In Buchnera aphidicola subsp. Acyrthosiphon pisum (strain APS) (Acyrthosiphon pisum symbiotic bacterium), this protein is NADH-quinone oxidoreductase subunit F (nuoF).